We begin with the raw amino-acid sequence, 98 residues long: Small ribosomal subunit protein eS24 (98 aa).

The protein belongs to the eukaryotic ribosomal protein eS24 family.

This is Small ribosomal subunit protein eS24 from Thermococcus onnurineus (strain NA1).